The sequence spans 148 residues: UPF0251 protein Cbei_2962 (148 aa).

The protein belongs to the UPF0251 family.

The sequence is that of UPF0251 protein Cbei_2962 from Clostridium beijerinckii (strain ATCC 51743 / NCIMB 8052) (Clostridium acetobutylicum).